The sequence spans 491 residues: UDP-N-acetylmuramate--L-alanine ligase (491 aa).

ATP is bound at residue 126–132; it reads GTHGKTT.

This sequence belongs to the MurCDEF family.

It is found in the cytoplasm. The enzyme catalyses UDP-N-acetyl-alpha-D-muramate + L-alanine + ATP = UDP-N-acetyl-alpha-D-muramoyl-L-alanine + ADP + phosphate + H(+). The protein operates within cell wall biogenesis; peptidoglycan biosynthesis. Cell wall formation. The sequence is that of UDP-N-acetylmuramate--L-alanine ligase from Yersinia pestis (strain Pestoides F).